The primary structure comprises 315 residues: Acetaldehyde dehydrogenase (315 aa).

Residue 13 to 16 (SGNI) participates in NAD(+) binding. The Acyl-thioester intermediate role is filled by cysteine 143. Residues 174–182 (SAGPGTRKN) and asparagine 285 contribute to the NAD(+) site.

It belongs to the acetaldehyde dehydrogenase family.

The catalysed reaction is acetaldehyde + NAD(+) + CoA = acetyl-CoA + NADH + H(+). The sequence is that of Acetaldehyde dehydrogenase from Shewanella woodyi (strain ATCC 51908 / MS32).